The sequence spans 157 residues: Immediate-early protein ICP-18 (157 aa).

This chain is Immediate-early protein ICP-18, found in Frog virus 3 (isolate Goorha) (FV-3).